The primary structure comprises 318 residues: L-lactate dehydrogenase (318 aa).

Residues Val18, Asp39, Lys44, Tyr69, and Gly83–Ala84 each bind NAD(+). The substrate site is built by Gln86 and Arg92. NAD(+) is bound by residues Ser105, Val122–Asn124, and Ser147. Asn124 to Asp127 provides a ligand contact to substrate. Asp152–Arg155 serves as a coordination point for substrate. His179 serves as the catalytic Proton acceptor. Residue Tyr225 is modified to Phosphotyrosine. Position 234 (Thr234) interacts with substrate.

This sequence belongs to the LDH/MDH superfamily. LDH family. As to quaternary structure, homotetramer.

Its subcellular location is the cytoplasm. It carries out the reaction (S)-lactate + NAD(+) = pyruvate + NADH + H(+). It participates in fermentation; pyruvate fermentation to lactate; (S)-lactate from pyruvate: step 1/1. Functionally, catalyzes the conversion of lactate to pyruvate. The sequence is that of L-lactate dehydrogenase from Clostridium botulinum (strain Langeland / NCTC 10281 / Type F).